A 428-amino-acid chain; its full sequence is MADKKAQLIIEGSAPVELPVLSGTMGPDVVDVRGLTATGHFTFDPGFMSTASCESKITYIDGDKGVLLHRGYPIEQLAEKSDYLETCYLLLNGELPTAAQKEQFVGTIKNHTMVHEQLKTFFNGFRRDAHPMAVMCGVIGALSAFYHDSLDINNPKHREVSAHRLIAKMPTIAAMVYKYSKGEPMMYPRNDLNYAENFLHMMFNTPCETKPISPVLAKAMDRIFILHADHEQNASTSTVRLAGSSGANPFACIASGIAALWGPAHGGANEAVLRMLDEIGDVSNIDKFVEKAKDKNDPFKLMGFGHRVYKNFDPRAKVMKQTCDEVLQELGINDPQLELAMKLEEIARHDPYFVERNLYPNVDFYSGIILKAIGIPTSMFTVIFALARTVGWISHWQEMLSGPYKIGRPRQLYTGHTQRDFTALKDRG.

Residues His265, His306, and Asp363 contribute to the active site.

This sequence belongs to the citrate synthase family. As to quaternary structure, homohexamer.

The enzyme catalyses oxaloacetate + acetyl-CoA + H2O = citrate + CoA + H(+). The protein operates within carbohydrate metabolism; tricarboxylic acid cycle; isocitrate from oxaloacetate: step 1/2. With respect to regulation, allosterically inhibited by NADH. The sequence is that of Citrate synthase (gltA) from Pseudomonas aeruginosa (strain ATCC 15692 / DSM 22644 / CIP 104116 / JCM 14847 / LMG 12228 / 1C / PRS 101 / PAO1).